We begin with the raw amino-acid sequence, 633 residues long: Copine-7 (633 aa).

C2 domains follow at residues 2–133 (SAGS…MRVS) and 212–339 (NAGK…AQWD). Ca(2+) is bound by residues aspartate 245, aspartate 251, aspartate 307, aspartate 309, and aspartate 315. In terms of domain architecture, VWFA spans 382-581 (HFTVAIDFTA…PALRDIVQFV (200 aa)).

Belongs to the copine family. Requires Ca(2+) as cofactor. As to expression, expressed in the brain, testis, thymus and small intestine.

Its subcellular location is the cytoplasm. The protein resides in the nucleus. It localises to the cell membrane. Its function is as follows. Calcium-dependent phospholipid-binding protein that may play a role in calcium-mediated intracellular processes. The polypeptide is Copine-7 (Homo sapiens (Human)).